A 203-amino-acid chain; its full sequence is Imidazoleglycerol-phosphate dehydratase (203 aa).

Belongs to the imidazoleglycerol-phosphate dehydratase family.

It is found in the cytoplasm. The enzyme catalyses D-erythro-1-(imidazol-4-yl)glycerol 3-phosphate = 3-(imidazol-4-yl)-2-oxopropyl phosphate + H2O. It functions in the pathway amino-acid biosynthesis; L-histidine biosynthesis; L-histidine from 5-phospho-alpha-D-ribose 1-diphosphate: step 6/9. This Salinispora tropica (strain ATCC BAA-916 / DSM 44818 / JCM 13857 / NBRC 105044 / CNB-440) protein is Imidazoleglycerol-phosphate dehydratase.